Here is a 241-residue protein sequence, read N- to C-terminus: NLP effector protein 7 (241 aa).

Residues Met-1–Ala-19 form the signal peptide. Residues Ala-105–Ala-115 carry the Conserved undecapeptide motif motif. Residues Gly-125 to Leu-131 carry the Conserved heptapeptide motif motif. Asn-144 is a glycosylation site (N-linked (GlcNAc...) asparagine).

The protein belongs to the Necrosis inducing protein (NPP1) family.

It localises to the secreted. In terms of biological role, secreted effector that acts as a pathogen-associated molecular pattern (PAMP) recognized by the plant immune system. Induces necrosis in Nicotiana benthamiana leaves and can induce Phytophthora capsici resistance in Nicotiana benthamiana. Also significantly improves disease resistance of Arabidopsis thaliana to Hyaloperonospora arabidopsidis. causes an inhibition of plant growth which is typically associated with enhanced immunity when over-expressed in Arabidopsis. This is NLP effector protein 7 from Plasmopara viticola (Downy mildew of grapevine).